Here is a 216-residue protein sequence, read N- to C-terminus: Soluble inorganic pyrophosphatase 3 (216 aa).

A compositionally biased stretch (acidic residues) spans methionine 1–glutamine 10. The tract at residues methionine 1–lysine 21 is disordered. Lysine 66 and arginine 80 together coordinate substrate. Tyrosine 88 (proton donor) is an active-site residue. Position 92 (tyrosine 92) interacts with substrate. Residues aspartate 102, aspartate 107, and aspartate 139 each contribute to the Mg(2+) site. Tyrosine 176 lines the substrate pocket.

This sequence belongs to the PPase family. Mg(2+) serves as cofactor. In terms of tissue distribution, expressed preferentially in stamen, pollen and flower, and at a low level in lateral roots and root elongation zones.

It localises to the cytoplasm. The catalysed reaction is diphosphate + H2O = 2 phosphate + H(+). This is Soluble inorganic pyrophosphatase 3 from Arabidopsis thaliana (Mouse-ear cress).